Reading from the N-terminus, the 27-residue chain is uncharacterized protein (27 aa).

Its subcellular location is the plastid. The protein resides in the chloroplast. This is an uncharacterized protein from Marchantia polymorpha (Common liverwort).